We begin with the raw amino-acid sequence, 263 residues long: Peptidoglycan-N-acetylmuramic acid deacetylase PdaA (263 aa).

The N-terminal stretch at 1–23 is a signal peptide; that stretch reads MKWMCSICCAAVLLAGGAAQAEA. The region spanning 66-247 is the NodB homology domain; sequence KTIYLTFDNG…DLKKQGYTFK (182 aa). D73 serves as the catalytic Proton acceptor. 2 residues coordinate a divalent metal cation: H124 and H128. H222 acts as the Proton donor in catalysis.

This sequence belongs to the polysaccharide deacetylase family.

In terms of biological role, catalyzes the deacetylation of N-acetylmuramic acid (MurNAc) residues in glycan strands of peptidoglycan, leading to the formation of muramic delta-lactam residues in spore cortex, after transpeptidation of deacetylated muramic acid residues. PdaA probably carries out both deacetylation and lactam ring formation and requires the product of CwlD activity on peptidoglycan as a substrate. Is required for germination. Cannot use chitin oligomer (hexa-N-acetylchitohexaose) as a substrate. This chain is Peptidoglycan-N-acetylmuramic acid deacetylase PdaA (pdaA), found in Bacillus subtilis (strain 168).